The primary structure comprises 146 residues: Holo-[acyl-carrier-protein] synthase (146 aa).

Asp-9 and Glu-58 together coordinate Mg(2+).

The protein belongs to the P-Pant transferase superfamily. AcpS family. Mg(2+) is required as a cofactor.

Its subcellular location is the cytoplasm. The enzyme catalyses apo-[ACP] + CoA = holo-[ACP] + adenosine 3',5'-bisphosphate + H(+). Transfers the 4'-phosphopantetheine moiety from coenzyme A to a Ser of acyl-carrier-protein. This is Holo-[acyl-carrier-protein] synthase from Baumannia cicadellinicola subsp. Homalodisca coagulata.